Reading from the N-terminus, the 158-residue chain is SUMO-conjugating enzyme UBC9 (158 aa).

One can recognise a UBC core domain in the interval 4–157 (IALSRLAQER…VRAQAKKFSP (154 aa)). The tract at residues 13–18 (RKAWRK) is interaction with sumo1. Cysteine 93 acts as the Glycyl thioester intermediate in catalysis.

Belongs to the ubiquitin-conjugating enzyme family. As to quaternary structure, forms a tight complex with RANGAP1 and RANBP2.

The protein resides in the nucleus. The protein operates within protein modification; protein sumoylation. In terms of biological role, accepts the ubiquitin-like proteins SUMO1, SUMO2 and SUMO3 from the UBLE1A-UBLE1B E1 complex and catalyzes their covalent attachment to other proteins with the help of an E3 ligase such as RANBP2 or CBX4. Essential for nuclear architecture and chromosome segregation. The sequence is that of SUMO-conjugating enzyme UBC9 (ube2i) from Pagrus major (Red sea bream).